The following is a 538-amino-acid chain: Translation initiation factor IF-3, chloroplastic (538 aa).

A chloroplast-targeting transit peptide spans 1–140; it reads MVRSSCLQCD…VTQRKEIAVF (140 aa). The segment at 141–290 is head; that stretch reads SASGQAAEPE…EEVEEEQEVL (150 aa). 2 disordered regions span residues 146-165 and 188-210; these read AAEP…PAAK and RTDS…NWPS. The segment at 291-474 is IF-3 like; sequence SWADRRRALA…LILNLAPAGE (184 aa). Residues 484-538 form a disordered region; that stretch reads AERDRKAAAEEEGEGDDLDFVDENEDEDVEGEGEEEEAEELEEETAEGTEVPTRS. Positions 493–530 are enriched in acidic residues; that stretch reads EEEGEGDDLDFVDENEDEDVEGEGEEEEAEELEEETAE.

Belongs to the IF-3 family. In terms of assembly, monomer. Post-translationally, the N-terminus is blocked.

Its subcellular location is the plastid. The protein localises to the chloroplast. Involved in chloroplast protein synthesis. It enhances the poly(A,U,G)-dependent binding of the initiator tRNA to chloroplast 30S subunits. This Euglena gracilis protein is Translation initiation factor IF-3, chloroplastic.